Here is a 247-residue protein sequence, read N- to C-terminus: Type III pantothenate kinase (247 aa).

6 to 13 is a binding site for ATP; that stretch reads DVGNTHTT. Position 101–104 (101–104) interacts with substrate; it reads GADR. Aspartate 103 acts as the Proton acceptor in catalysis. A K(+)-binding site is contributed by aspartate 123. Threonine 126 serves as a coordination point for ATP. Residue threonine 177 coordinates substrate.

This sequence belongs to the type III pantothenate kinase family. In terms of assembly, homodimer. The cofactor is NH4(+). It depends on K(+) as a cofactor.

It is found in the cytoplasm. The catalysed reaction is (R)-pantothenate + ATP = (R)-4'-phosphopantothenate + ADP + H(+). Its pathway is cofactor biosynthesis; coenzyme A biosynthesis; CoA from (R)-pantothenate: step 1/5. Its function is as follows. Catalyzes the phosphorylation of pantothenate (Pan), the first step in CoA biosynthesis. This chain is Type III pantothenate kinase, found in Thermosipho melanesiensis (strain DSM 12029 / CIP 104789 / BI429).